The sequence spans 86 residues: Small ribosomal subunit protein bS16 (86 aa).

It belongs to the bacterial ribosomal protein bS16 family.

The sequence is that of Small ribosomal subunit protein bS16 from Myxococcus xanthus (strain DK1622).